The sequence spans 111 residues: Probable 4-amino-4-deoxy-L-arabinose-phosphoundecaprenol flippase subunit ArnE (111 aa).

Residues methionine 1–alanine 37 are Cytoplasmic-facing. Residues leucine 38–leucine 58 form a helical membrane-spanning segment. Residues leucine 40–serine 109 form the EamA domain. Residues glutamine 59–threonine 60 lie on the Periplasmic side of the membrane. Residues valine 61–alanine 81 traverse the membrane as a helical segment. At threonine 82 to glutamate 87 the chain is on the cytoplasmic side. A helical membrane pass occupies residues proline 88–glycine 108. The Periplasmic portion of the chain corresponds to serine 109–valine 111.

It belongs to the ArnE family. In terms of assembly, heterodimer of ArnE and ArnF.

The protein resides in the cell inner membrane. Its pathway is bacterial outer membrane biogenesis; lipopolysaccharide biosynthesis. Functionally, translocates 4-amino-4-deoxy-L-arabinose-phosphoundecaprenol (alpha-L-Ara4N-phosphoundecaprenol) from the cytoplasmic to the periplasmic side of the inner membrane. The sequence is that of Probable 4-amino-4-deoxy-L-arabinose-phosphoundecaprenol flippase subunit ArnE from Escherichia fergusonii (strain ATCC 35469 / DSM 13698 / CCUG 18766 / IAM 14443 / JCM 21226 / LMG 7866 / NBRC 102419 / NCTC 12128 / CDC 0568-73).